Reading from the N-terminus, the 580-residue chain is Laccase-6 (580 aa).

An N-terminal signal peptide occupies residues 1–22 (MSCSWMIPVFAILAFVASAAQA). 2 Plastocyanin-like domains span residues 30-148 (NVAT…PRRA) and 158-317 (EEKT…YVDA). N44 and N78 each carry an N-linked (GlcNAc...) asparagine glycan. H82, H84, H127, and H129 together coordinate Cu cation. N306, N335, N385, N397, and N462 each carry an N-linked (GlcNAc...) asparagine glycan. The Plastocyanin-like 3 domain maps to 424–564 (DFPDQPPVAF…AMVFEVESGP (141 aa)). Cu cation contacts are provided by H480, H483, H485, H543, C544, H545, and H549.

It belongs to the multicopper oxidase family. Cu cation is required as a cofactor.

It is found in the secreted. The protein localises to the extracellular space. It localises to the apoplast. It catalyses the reaction 4 hydroquinone + O2 = 4 benzosemiquinone + 2 H2O. In terms of biological role, lignin degradation and detoxification of lignin-derived products. The polypeptide is Laccase-6 (LAC6) (Oryza sativa subsp. japonica (Rice)).